The sequence spans 383 residues: MAEKRDYYEVLGVSKNATDDELKKAYRKKAIQYHPDKNPGDKEAEEHFKEVAEAYDVLSDPQKRSQYDQFGHAGLGGAAGGGFSGGGMSMEDIFSRFGDLFGGFGGFGGFSDMGGGSRRRVRRGSDLRVRVKLSLADISKGVEKKVKVKKQVVCSKCRGDGTEEANGKTTCQTCHGTGVVTRVSNTFLGAMQTQSTCPTCHGEGEIITKPCSKCKGEGVEIGEEVISFHIPAGVAEGMQMSVNGKGNAAPRGGVNGDLIVVIAEEPDPNLIRNGNDLIYNLLISVPLAIKGGSVEVPTIDGRAKIRIEAGTQPGKMLRLRNKGLPSVNGYGMGDQLVNVNVYIPESIDAKDEQAIAAMENSDSFKPTDAARKDIDKKYREMLD.

Positions 6–71 constitute a J domain; sequence DYYEVLGVSK…QKRSQYDQFG (66 aa). Residues 141 to 223 form a CR-type zinc finger; the sequence is GVEKKVKVKK…CKGEGVEIGE (83 aa). Positions 154, 157, 171, 174, 197, 200, 211, and 214 each coordinate Zn(2+). 4 CXXCXGXG motif repeats span residues 154–161, 171–178, 197–204, and 211–218; these read CSKCRGDG, CQTCHGTG, CPTCHGEG, and CSKCKGEG.

This sequence belongs to the DnaJ family. As to quaternary structure, homodimer. Zn(2+) is required as a cofactor.

It is found in the cytoplasm. In terms of biological role, participates actively in the response to hyperosmotic and heat shock by preventing the aggregation of stress-denatured proteins and by disaggregating proteins, also in an autonomous, DnaK-independent fashion. Unfolded proteins bind initially to DnaJ; upon interaction with the DnaJ-bound protein, DnaK hydrolyzes its bound ATP, resulting in the formation of a stable complex. GrpE releases ADP from DnaK; ATP binding to DnaK triggers the release of the substrate protein, thus completing the reaction cycle. Several rounds of ATP-dependent interactions between DnaJ, DnaK and GrpE are required for fully efficient folding. Also involved, together with DnaK and GrpE, in the DNA replication of plasmids through activation of initiation proteins. The chain is Chaperone protein DnaJ from Porphyromonas gingivalis (strain ATCC BAA-308 / W83).